The chain runs to 96 residues: MNKDAQMRATINQKLIETGERERLKELLRAKLIECGWKDQLKAHCKDVIKEKGLEHVTVDDLVAEITPKGRALVPDSVKKELLQRIRTFLAQHASL.

The protein belongs to the ENY2 family. Component of the nuclear pore complex (NPC)-associated TREX-2 complex (transcription and export complex 2). Component of the SAGA transcription coactivator-HAT complex. Within the SAGA complex, participates in a subcomplex of SAGA called the DUB module (deubiquitination module).

It localises to the nucleus. It is found in the nucleoplasm. Functionally, involved in mRNA export coupled transcription activation by association with both the TREX-2 and the SAGA complexes. The transcription regulatory histone acetylation (HAT) complex SAGA is a multiprotein complex that activates transcription by remodeling chromatin and mediating histone acetylation and deubiquitination. Within the SAGA complex, participates in a subcomplex that specifically deubiquitinates histones. The SAGA complex is recruited to specific gene promoters by activators, where it is required for transcription. The TREX-2 complex functions in docking export-competent ribonucleoprotein particles (mRNPs) to the nuclear entrance of the nuclear pore complex (nuclear basket). TREX-2 participates in mRNA export and accurate chromatin positioning in the nucleus by tethering genes to the nuclear periphery. This Taeniopygia guttata (Zebra finch) protein is Transcription and mRNA export factor ENY2.